Here is a 101-residue protein sequence, read N- to C-terminus: Putative pterin-4-alpha-carbinolamine dehydratase (101 aa).

It belongs to the pterin-4-alpha-carbinolamine dehydratase family.

It carries out the reaction (4aS,6R)-4a-hydroxy-L-erythro-5,6,7,8-tetrahydrobiopterin = (6R)-L-erythro-6,7-dihydrobiopterin + H2O. The chain is Putative pterin-4-alpha-carbinolamine dehydratase from Rhodopseudomonas palustris (strain BisA53).